A 419-amino-acid polypeptide reads, in one-letter code: MDKLKIEASGALAGDVVISGAKNAALPILMAGVLAETDFNVSNVPSLRDVNTSCELLRCLGAEVTRSGDDKVCISTTNLNEFCAPYELVKTMRASILILGPLLARYGKADVSLPGGCAIGARPVNLHLQGLEQMGAKIEVKEGYIKARVDGRLKGAHIFMDMISVGATENLLMAAALADGETVIENAAREPEVVDLANCLIAMGAKIEGAGTDTVRIQGVESLQGCDYQVMPDRIETGSFLVAAAVTRGKIRCIKADPKSLEAVLAKLEDAGASITTGDDWIELDMQGQRPKAVNIKTVAYPGFPTDMQAQFCVLNALAEGTATITETIFENRFMHVPELSRMGATMELEGNTCIIHGIEKLNGAQVMATDLRASASLVIAGLVADGTTTVDRIYHLDRGYEHIEDKFKGLGGDVKRVK.

22-23 (KN) lines the phosphoenolpyruvate pocket. Arginine 93 contacts UDP-N-acetyl-alpha-D-glucosamine. Cysteine 117 serves as the catalytic Proton donor. Cysteine 117 carries the 2-(S-cysteinyl)pyruvic acid O-phosphothioketal modification. Residues aspartate 307 and isoleucine 329 each coordinate UDP-N-acetyl-alpha-D-glucosamine.

This sequence belongs to the EPSP synthase family. MurA subfamily.

Its subcellular location is the cytoplasm. It carries out the reaction phosphoenolpyruvate + UDP-N-acetyl-alpha-D-glucosamine = UDP-N-acetyl-3-O-(1-carboxyvinyl)-alpha-D-glucosamine + phosphate. It participates in cell wall biogenesis; peptidoglycan biosynthesis. Its function is as follows. Cell wall formation. Adds enolpyruvyl to UDP-N-acetylglucosamine. The protein is UDP-N-acetylglucosamine 1-carboxyvinyltransferase of Shewanella piezotolerans (strain WP3 / JCM 13877).